The sequence spans 80 residues: uncharacterized protein (80 aa).

Residues 10–29 form a helical membrane-spanning segment; the sequence is FVAREYPLVVVPFIYFVLFL.

It is found in the membrane. This is an uncharacterized protein from Saccharomyces cerevisiae (strain ATCC 204508 / S288c) (Baker's yeast).